We begin with the raw amino-acid sequence, 154 residues long: Endoribonuclease YbeY (154 aa).

3 residues coordinate Zn(2+): His113, His117, and His123.

This sequence belongs to the endoribonuclease YbeY family. Zn(2+) serves as cofactor.

The protein resides in the cytoplasm. Its function is as follows. Single strand-specific metallo-endoribonuclease involved in late-stage 70S ribosome quality control and in maturation of the 3' terminus of the 16S rRNA. This chain is Endoribonuclease YbeY, found in Vibrio campbellii (strain ATCC BAA-1116).